A 256-amino-acid chain; its full sequence is Ribosomal RNA small subunit methyltransferase J (256 aa).

Residues arginine 101–aspartate 102, glutamate 117–arginine 118, serine 153–serine 154, and aspartate 176 contribute to the S-adenosyl-L-methionine site.

It belongs to the methyltransferase superfamily. RsmJ family.

Its subcellular location is the cytoplasm. The enzyme catalyses guanosine(1516) in 16S rRNA + S-adenosyl-L-methionine = N(2)-methylguanosine(1516) in 16S rRNA + S-adenosyl-L-homocysteine + H(+). Specifically methylates the guanosine in position 1516 of 16S rRNA. In Photobacterium profundum (strain SS9), this protein is Ribosomal RNA small subunit methyltransferase J.